The following is a 326-amino-acid chain: Photosystem II assembly factor Ycf39 (326 aa).

The protein belongs to the NmrA-type oxidoreductase family. Ycf39 subfamily. Purified in several chlorophyll- and carotenoid-containing complexes, including photosystem II (PSII) assembly intermediate complex RCII* (iD1, D1, D2, PsbE, PsbF, PsbI, Ycf39, Ycf48, HliC and HliD) and the Ycf39-Hlip complex (Ycf39, HliC, HliD and pigments). Tagged protein does not pull down mature PSII.

It localises to the cellular thylakoid membrane. Its function is as follows. Requires HliD to bind pigments. The Ycf39-Hlip complex binds D1 at an early stage of PSII assembly along with Ycf48, ribosomes and ChlG, the last enzyme in chlorophyll biosynthesis; it may be involved in chlorophyll reuse and delivery to D1 in the initial stages of PSII assembly. The Ycf39-Hlip complex efficiently quenches chlorophyll fluorescence, contributing to photoprotection. This is Photosystem II assembly factor Ycf39 from Synechocystis sp. (strain ATCC 27184 / PCC 6803 / Kazusa).